The following is a 1818-amino-acid chain: Integrin beta-4 (1818 aa).

Positions 1-28 (MAGPCCSPWVKLLLLAAMLSASLPGDLA) are cleaved as a signal peptide. The Extracellular segment spans residues 29 to 712 (NRCKKAQVKS…HKKKDCPPGS (684 aa)). The 45-residue stretch at 30–74 (RCKKAQVKSCTECIRVDKSCAYCTDELFKERRCNTQAELLAAGCR) folds into the PSI domain. Intrachain disulfides connect Cys-31/Cys-49, Cys-39/Cys-457, Cys-42/Cys-62, Cys-52/Cys-73, Cys-246/Cys-289, Cys-459/Cys-478, Cys-470/Cys-481, and Cys-483/Cys-492. The region spanning 132–310 (DLYILMDFSN…KTQDYPSVPT (179 aa)) is the VWFA domain. Mg(2+)-binding residues include Ser-140 and Ser-142. Ser-142, Asp-145, Asp-146, and Asp-177 together coordinate Ca(2+). An involved in NRG1- and IGF1-binding region spans residues 195–200 (WPNSDP). The Ca(2+) site is built by Asn-229, Asp-231, Pro-233, and Glu-234. Glu-234 contributes to the Mg(2+) binding site. Asn-328 is a glycosylation site (N-linked (GlcNAc...) asparagine). Position 351 (Glu-351) interacts with Ca(2+). I-EGF domains are found at residues 459–493 (CELQ…KTCN), 494–539 (CSTG…HFCE), 540–576 (YDNF…RSCD), and 577–617 (CPLS…TTCE). The Cell attachment site motif lies at 473-475 (RGD). N-linked (GlcNAc...) asparagine glycosylation occurs at Asn-493. Disulfide bonds link Cys-494/Cys-522, Cys-505/Cys-520, Cys-514/Cys-525, Cys-527/Cys-538, Cys-545/Cys-559, Cys-553/Cys-564, Cys-566/Cys-575, Cys-577/Cys-600, Cys-584/Cys-598, Cys-592/Cys-603, and Cys-605/Cys-616. Asn-581 is a glycosylation site (N-linked (GlcNAc...) asparagine). Asn-619 carries N-linked (GlcNAc...) asparagine glycosylation. 4 cysteine pairs are disulfide-bonded: Cys-628-Cys-673, Cys-634-Cys-653, Cys-637-Cys-650, and Cys-682-Cys-708. Asn-697 carries N-linked (GlcNAc...) asparagine glycosylation. Residues 713–733 (FWWLIPLLIFLLLLLALLLLL) form a helical membrane-spanning segment. A palmitoylated on several cysteines region spans residues 734–751 (CWKYCACCKACLGLLPCC). The Cytoplasmic portion of the chain corresponds to 734 to 1818 (CWKYCACCKA…THMDQQFFQT (1085 aa)). Residue Ser-773 is modified to Phosphoserine. In terms of domain architecture, Calx-beta spans 981 to 1086 (VNITIIKEQA…QVRRFQVQLS (106 aa)). The Cell attachment site motif lies at 1005-1007 (RGD). 2 positions are modified to phosphoserine: Ser-1071 and Ser-1121. Residues 1115–1137 (INQTLSSPPPPHGDLGAPQNPNA) form a disordered region. Fibronectin type-III domains are found at residues 1131–1220 (APQN…THQE) and 1224–1323 (EPGR…TQPK). Residues 1402–1433 (LSASSGRSDEDGSVAGGVEGEGSGWIRGATPR) are disordered. Gly residues predominate over residues 1415–1426 (VAGGVEGEGSGW). Phosphoserine occurs at positions 1451, 1454, and 1470. Thr-1483 bears the Phosphothreonine mark. Residue Ser-1490 is modified to Phosphoserine. Thr-1526 carries the phosphothreonine modification. 2 consecutive Fibronectin type-III domains span residues 1526–1621 (TPTR…VHPQ) and 1639–1735 (APGP…SQVG). Residue Ser-1787 is modified to Phosphoserine.

This sequence belongs to the integrin beta chain family. In terms of assembly, heterodimer of an alpha and a beta subunit. Beta-4 associates with alpha-6. Interacts (via cytoplasmic region) with COL17A1 (via cytoplasmic region). Interacts (via cytoplasmic region) with DST isoform 3 (via N-terminus). Interacts (via cytoplasmic domain) with DST (via N-terminus). Interacts with RAC1. ITGA6:ITGB4 is found in a ternary complex with NRG1 and ERBB3. ITGA6:ITGB4 is found in a ternary complex with IGF1 and IGF1R. ITGA6:ITGB4 interacts with IGF2. Interacts with TMEM268; this interaction prevents ITGB4 degradation. In terms of processing, palmitoylated by DHHC3 at several cysteines of the membrane-proximal region, enhancing stability and cell surface expression. Palmitoylation also promotes secondary association with tertaspanins.

The protein localises to the cell membrane. It localises to the cell junction. It is found in the hemidesmosome. In terms of biological role, integrin alpha-6/beta-4 is a receptor for laminin. It plays a critical structural role in the hemidesmosome of epithelial cells. Is required for the regulation of keratinocyte polarity and motility. ITGA6:ITGB4 binds to NRG1 (via EGF domain) and this binding is essential for NRG1-ERBB signaling. ITGA6:ITGB4 binds to IGF1 and this binding is essential for IGF1 signaling. ITGA6:ITGB4 binds to IGF2 and this binding is essential for IGF2 signaling. The chain is Integrin beta-4 (Itgb4) from Mus musculus (Mouse).